A 419-amino-acid chain; its full sequence is 26S proteasome regulatory subunit 8 homolog A (419 aa).

Ala-2 is subject to N-acetylalanine. Gly-202–Thr-209 provides a ligand contact to ATP. A Glycyl lysine isopeptide (Lys-Gly) (interchain with G-Cter in ubiquitin) cross-link involves residue Lys-406.

The protein belongs to the AAA ATPase family. In terms of assembly, component of the 19S regulatory particle (RP/PA700) base subcomplex of the 26S proteasome. The 26S proteasome is composed of a core protease (CP), known as the 20S proteasome, capped at one or both ends by the 19S regulatory particle (RP/PA700). The RP/PA700 complex is composed of at least 17 different subunits in two subcomplexes, the base and the lid, which form the portions proximal and distal to the 20S proteolytic core, respectively.

The protein resides in the cytoplasm. Its subcellular location is the nucleus. Functionally, the 26S proteasome is involved in the ATP-dependent degradation of ubiquitinated proteins. The regulatory (or ATPase) complex confers ATP dependency and substrate specificity to the 26S complex. The protein is 26S proteasome regulatory subunit 8 homolog A (RPT6A) of Arabidopsis thaliana (Mouse-ear cress).